Here is a 345-residue protein sequence, read N- to C-terminus: Nuclear hormone receptor family nhr-176 (345 aa).

A DNA-binding region (nuclear receptor) is located at residues 7–82; the sequence is IQPCLVCGQS…AGMLEKMVFS (76 aa). An NR C4-type zinc finger spans residues 10-30; the sequence is CLVCGQSSNSILFGAPSCRAC. An NR C4-type; degenerate zinc finger spans residues 46 to 65; sequence NNCLGECSFAKKSMKPCQSC. The region spanning 92 to 342 is the NR LBD domain; that stretch reads FEKSILEELE…CPLYAISTNS (251 aa). An AF-2 region spans residues 331–342; sequence SGCPLYAISTNS.

The protein localises to the nucleus. Functionally, nuclear hormone receptor. Binds to xenobiotic ligand thiabendazole (TBZ), in vitro. Involved in the up-regulation of phase I detoxification genes, such as probable cytochrome P450 cyp-35d1, in response to TBZ. This chain is Nuclear hormone receptor family nhr-176, found in Caenorhabditis elegans.